The primary structure comprises 34 residues: Ribonuclease PL1 (34 aa).

Asn4 carries N-linked (GlcNAc...) asparagine; partial glycosylation. Residue His15 is the Proton acceptor of the active site.

The protein belongs to the pancreatic ribonuclease family.

It is found in the lysosome. The catalysed reaction is an [RNA] containing cytidine + H2O = an [RNA]-3'-cytidine-3'-phosphate + a 5'-hydroxy-ribonucleotide-3'-[RNA].. It carries out the reaction an [RNA] containing uridine + H2O = an [RNA]-3'-uridine-3'-phosphate + a 5'-hydroxy-ribonucleotide-3'-[RNA].. This chain is Ribonuclease PL1, found in Sus scrofa (Pig).